The primary structure comprises 263 residues: ABC transporter I family member 17 (263 aa).

The 232-residue stretch at 29–260 folds into the ABC transporter domain; it reads IRVHDLTRVA…THPMAQRFLQ (232 aa). 62-69 is a binding site for ATP; it reads GPSGSGKS.

The protein belongs to the ABC transporter superfamily. ABCI family.

This chain is ABC transporter I family member 17 (ABCI17), found in Arabidopsis thaliana (Mouse-ear cress).